Reading from the N-terminus, the 35-residue chain is GFGSLFKFLAKKVAKTVAKQAAKQGAKYIANKQME.

Residue E35 is modified to Glutamic acid 1-amide.

The protein belongs to the cationic peptide 04 (cupiennin) family. 01 subfamily. In terms of tissue distribution, expressed by the venom gland.

It is found in the secreted. Has antimicrobial activity against E.coli, E.faecalis, P.aeruginosa, and S.aureus. Has insecticidal and hemolytic activities. Probably acts by disturbing membrane function with its amphipathic structure. The sequence is that of Cupiennin-1b from Cupiennius salei (American wandering spider).